Here is a 68-residue protein sequence, read N- to C-terminus: Conotoxin TsMMSK-021 (68 aa).

The signal sequence occupies residues 1–20; that stretch reads MMSKLGVLLTICLLLFPLTA. Residues 21–50 constitute a propeptide that is removed on maturation; the sequence is VPLDGDQHADRPADRMQDISSEQHPLFDPV. Disulfide bonds link Cys53-Cys66, Cys54-Cys62, and Cys58-Cys65. A 4-hydroxyproline modification is found at Pro64.

The protein belongs to the conotoxin M superfamily. Expressed by the venom duct.

It is found in the secreted. The chain is Conotoxin TsMMSK-021 from Conus tessulatus (Tessellate cone).